Here is a 231-residue protein sequence, read N- to C-terminus: Monothiol glutaredoxin-6 (231 aa).

Positions 1-29 are cleaved as a signal peptide; that stretch reads MIPSNKRNARILSITTLLLLLVFFVAQNA. A Glutaredoxin domain is found at 116 to 219; it reads QKEYSLILDL…ESLQVWSDGK (104 aa). Position 136 (cysteine 136) interacts with [2Fe-2S] cluster.

The protein belongs to the glutaredoxin family. Monothiol subfamily.

The protein resides in the vacuole. The polypeptide is Monothiol glutaredoxin-6 (GRX6) (Saccharomyces cerevisiae (strain ATCC 204508 / S288c) (Baker's yeast)).